The following is a 636-amino-acid chain: DNA-directed RNA polymerase subunit beta' (636 aa).

Zn(2+)-binding residues include Cys70, Cys72, Cys85, and Cys88. Asp471, Asp473, and Asp475 together coordinate Mg(2+).

It belongs to the RNA polymerase beta' chain family. RpoC1 subfamily. Requires Mg(2+) as cofactor. The cofactor is Zn(2+).

Its subcellular location is the plastid. The protein localises to the cyanelle. It carries out the reaction RNA(n) + a ribonucleoside 5'-triphosphate = RNA(n+1) + diphosphate. Its function is as follows. DNA-dependent RNA polymerase catalyzes the transcription of DNA into RNA using the four ribonucleoside triphosphates as substrates. This chain is DNA-directed RNA polymerase subunit beta', found in Cyanophora paradoxa.